Reading from the N-terminus, the 292-residue chain is Selenate reductase subunit B (292 aa).

Residues 1-43 (MGSKETKNTSRRDFLIKGAGAAALGAGAFAISQVPLLEKLASA) constitute a signal peptide (tat-type signal). 3 4Fe-4S ferredoxin-type domains span residues 84–113 (WIMV…PPGV), 129–160 (VTKK…KSED), and 161–190 (GIVA…FDWG). The [4Fe-4S] cluster site is built by C93, C96, C99, C103, C138, C141, C146, C150, C170, C173, C176, C180, C230, C233, C245, and C249.

The complex is composed of three subunits: SrdA, SrdB and SrdC. [4Fe-4S] cluster is required as a cofactor. In terms of processing, predicted to be exported by the Tat system. The position of the signal peptide cleavage has not been experimentally proven.

The protein resides in the secreted. It catalyses the reaction selenite + a quinone + H2O = selenate + a quinol. Its function is as follows. Component of the respiratory selenate reductase complex, which catalyzes the reduction of selenate to selenite. This subunit probably transfers electrons from SrdC to SrdA. The protein is Selenate reductase subunit B of Mesobacillus selenatarsenatis (strain DSM 18680 / JCM 14380 / FERM P-15431 / SF-1).